A 24-amino-acid polypeptide reads, in one-letter code: XYXDKSVYFDLEDKGNTXGQXXXY.

The protein belongs to the psaH family.

The protein resides in the plastid. The protein localises to the chloroplast thylakoid membrane. In terms of biological role, possible role could be the docking of the LHC I antenna complex to the core complex. The sequence is that of Photosystem I reaction center subunit VI, chloroplastic (PSAH) from Cucumis sativus (Cucumber).